The sequence spans 355 residues: GTPase Obg (355 aa).

Positions 1–159 (MKFLDEAKVY…KTIWLRLKLI (159 aa)) constitute an Obg domain. Residues 160–327 (ADAGLVGLPN…ALRALRDIIV (168 aa)) enclose the OBG-type G domain. Residues 166-173 (GLPNAGKS), 191-195 (FTTLH), 212-215 (DIPG), 279-282 (SQID), and 308-310 (SAA) each bind GTP. Residues serine 173 and threonine 193 each contribute to the Mg(2+) site. Residues 333–355 (GDTALPDRSMPHESEVEEEDDRL) are disordered.

The protein belongs to the TRAFAC class OBG-HflX-like GTPase superfamily. OBG GTPase family. In terms of assembly, monomer. The cofactor is Mg(2+).

It is found in the cytoplasm. Its function is as follows. An essential GTPase which binds GTP, GDP and possibly (p)ppGpp with moderate affinity, with high nucleotide exchange rates and a fairly low GTP hydrolysis rate. Plays a role in control of the cell cycle, stress response, ribosome biogenesis and in those bacteria that undergo differentiation, in morphogenesis control. This chain is GTPase Obg, found in Agrobacterium fabrum (strain C58 / ATCC 33970) (Agrobacterium tumefaciens (strain C58)).